The primary structure comprises 309 residues: Homoserine O-succinyltransferase (309 aa).

Cysteine 142 (acyl-thioester intermediate) is an active-site residue. The substrate site is built by lysine 163 and serine 192. Catalysis depends on histidine 235, which acts as the Proton acceptor. Glutamate 237 is an active-site residue. Arginine 249 contributes to the substrate binding site.

The protein belongs to the MetA family.

The protein localises to the cytoplasm. The catalysed reaction is L-homoserine + succinyl-CoA = O-succinyl-L-homoserine + CoA. The protein operates within amino-acid biosynthesis; L-methionine biosynthesis via de novo pathway; O-succinyl-L-homoserine from L-homoserine: step 1/1. Transfers a succinyl group from succinyl-CoA to L-homoserine, forming succinyl-L-homoserine. This is Homoserine O-succinyltransferase from Edwardsiella ictaluri (strain 93-146).